Reading from the N-terminus, the 293-residue chain is MAITAQLVKQLRERTGAGMMDCKKALTETNGDIDAAVDYLREKGIAKAAKKADRIAAEGTTYVASSGNTAVLLELNSETDFVARNEGFQALVKEMADHILATKPADLDALMASEIETGKTVETKLNEAISTIGEKLTLRRFVLAEKTDADAFGEYLHMGGRIGVLAVVENSTDAEAAKDVAMHIAALNPKFVSREQVSAEELEHEKEILKQQALNEGKPENIVEKMVEGRLRKYLEEICAVDQPFVKNPDQTVAEFLKSKGGSLKSFVRYEVGEGIEKRQDNFADEVMGQMGK.

The involved in Mg(2+) ion dislocation from EF-Tu stretch occupies residues 79–82 (TDFV).

It belongs to the EF-Ts family.

It localises to the cytoplasm. Functionally, associates with the EF-Tu.GDP complex and induces the exchange of GDP to GTP. It remains bound to the aminoacyl-tRNA.EF-Tu.GTP complex up to the GTP hydrolysis stage on the ribosome. The sequence is that of Elongation factor Ts from Macrococcus caseolyticus (strain JCSC5402) (Macrococcoides caseolyticum).